The chain runs to 318 residues: Acetyl-coenzyme A carboxylase carboxyl transferase subunit alpha (318 aa).

Residues 31–292 (DLTNEIEKLE…NKTITKSLHA (262 aa)) enclose the CoA carboxyltransferase C-terminal domain.

It belongs to the AccA family. In terms of assembly, acetyl-CoA carboxylase is a heterohexamer composed of biotin carboxyl carrier protein (AccB), biotin carboxylase (AccC) and two subunits each of ACCase subunit alpha (AccA) and ACCase subunit beta (AccD).

The protein localises to the cytoplasm. The catalysed reaction is N(6)-carboxybiotinyl-L-lysyl-[protein] + acetyl-CoA = N(6)-biotinyl-L-lysyl-[protein] + malonyl-CoA. Its pathway is lipid metabolism; malonyl-CoA biosynthesis; malonyl-CoA from acetyl-CoA: step 1/1. Functionally, component of the acetyl coenzyme A carboxylase (ACC) complex. First, biotin carboxylase catalyzes the carboxylation of biotin on its carrier protein (BCCP) and then the CO(2) group is transferred by the carboxyltransferase to acetyl-CoA to form malonyl-CoA. In Listeria monocytogenes serotype 4a (strain HCC23), this protein is Acetyl-coenzyme A carboxylase carboxyl transferase subunit alpha.